We begin with the raw amino-acid sequence, 160 residues long: MGIEGVLKKGFITTSADTVLNYMRTGSLWPVTFGLACCAVEMMHAGMARYDLDRFGIIFRPSPRQADLMIVAGTLTNKMAPALRRVYDQLAEPRWVLSMGSCANGGGYYHYSYSVVRGADRVVPVDVYVPGCPPTAEALIYGLIQLQQKIKRTSTIARDE.

C37, C38, C102, and C132 together coordinate [4Fe-4S] cluster.

The protein belongs to the complex I 20 kDa subunit family. As to quaternary structure, NDH-1 is composed of 14 different subunits. Subunits NuoB, C, D, E, F, and G constitute the peripheral sector of the complex. It depends on [4Fe-4S] cluster as a cofactor.

The protein localises to the cell inner membrane. It catalyses the reaction a quinone + NADH + 5 H(+)(in) = a quinol + NAD(+) + 4 H(+)(out). Its function is as follows. NDH-1 shuttles electrons from NADH, via FMN and iron-sulfur (Fe-S) centers, to quinones in the respiratory chain. Couples the redox reaction to proton translocation (for every two electrons transferred, four hydrogen ions are translocated across the cytoplasmic membrane), and thus conserves the redox energy in a proton gradient. In Neisseria gonorrhoeae (strain NCCP11945), this protein is NADH-quinone oxidoreductase subunit B.